The sequence spans 191 residues: Elongation factor P (191 aa).

The protein belongs to the elongation factor P family.

The protein resides in the cytoplasm. It participates in protein biosynthesis; polypeptide chain elongation. Involved in peptide bond synthesis. Stimulates efficient translation and peptide-bond synthesis on native or reconstituted 70S ribosomes in vitro. Probably functions indirectly by altering the affinity of the ribosome for aminoacyl-tRNA, thus increasing their reactivity as acceptors for peptidyl transferase. The chain is Elongation factor P from Janthinobacterium sp. (strain Marseille) (Minibacterium massiliensis).